Reading from the N-terminus, the 141-residue chain is Large ribosomal subunit protein uL11 (141 aa).

This sequence belongs to the universal ribosomal protein uL11 family. As to quaternary structure, part of the ribosomal stalk of the 50S ribosomal subunit. Interacts with L10 and the large rRNA to form the base of the stalk. L10 forms an elongated spine to which L12 dimers bind in a sequential fashion forming a multimeric L10(L12)X complex. In terms of processing, one or more lysine residues are methylated.

Functionally, forms part of the ribosomal stalk which helps the ribosome interact with GTP-bound translation factors. This is Large ribosomal subunit protein uL11 from Aster yellows witches'-broom phytoplasma (strain AYWB).